Here is a 209-residue protein sequence, read N- to C-terminus: Kynurenine formamidase (209 aa).

Residue W20 coordinates substrate. Zn(2+) contacts are provided by H50, H54, and D56. The active-site Proton donor/acceptor is H60. 2 residues coordinate Zn(2+): H161 and E173.

Belongs to the Cyclase 1 superfamily. KynB family. Homodimer. Zn(2+) serves as cofactor.

The enzyme catalyses N-formyl-L-kynurenine + H2O = L-kynurenine + formate + H(+). It functions in the pathway amino-acid degradation; L-tryptophan degradation via kynurenine pathway; L-kynurenine from L-tryptophan: step 2/2. Its function is as follows. Catalyzes the hydrolysis of N-formyl-L-kynurenine to L-kynurenine, the second step in the kynurenine pathway of tryptophan degradation. This is Kynurenine formamidase from Bacillus thuringiensis subsp. konkukian (strain 97-27).